Reading from the N-terminus, the 327-residue chain is MSTVVEKSGEAKPGKVEVGVKLRGAEKVARIPVKIIPTEELPKKPDWIRVRIPVSPEVDRIKQLLRKHKLHSVCEEASCPNLGECFSGGTATFMIMGDICTRRCPFCDVGHGRPKPLDVDEPTNLAIAIADLRLKYVVITSVDRDDLRDGGAQHFADCLREIRKLSPGIQLETLVPDYRGRMDIALEITANEPPDVFNHNLETVPRLYRSSRPGSDFEWSLDLLQKFKQMVPHVPTKSGLMLGLGETDDEVIEVMQRMREHDIDMLTLGQYLQPSRNHLPVQRFVHPDTFAWFAEEGEKMGFKNVASGPLVRSSYHADQQAHGNKIG.

Residues Cys74, Cys79, Cys85, Cys100, Cys104, Cys107, and Ser314 each coordinate [4Fe-4S] cluster. In terms of domain architecture, Radical SAM core spans 86-303 (FSGGTATFMI…AEEGEKMGFK (218 aa)).

The protein belongs to the radical SAM superfamily. Lipoyl synthase family. The cofactor is [4Fe-4S] cluster.

It localises to the cytoplasm. It carries out the reaction [[Fe-S] cluster scaffold protein carrying a second [4Fe-4S](2+) cluster] + N(6)-octanoyl-L-lysyl-[protein] + 2 oxidized [2Fe-2S]-[ferredoxin] + 2 S-adenosyl-L-methionine + 4 H(+) = [[Fe-S] cluster scaffold protein] + N(6)-[(R)-dihydrolipoyl]-L-lysyl-[protein] + 4 Fe(3+) + 2 hydrogen sulfide + 2 5'-deoxyadenosine + 2 L-methionine + 2 reduced [2Fe-2S]-[ferredoxin]. It functions in the pathway protein modification; protein lipoylation via endogenous pathway; protein N(6)-(lipoyl)lysine from octanoyl-[acyl-carrier-protein]: step 2/2. In terms of biological role, catalyzes the radical-mediated insertion of two sulfur atoms into the C-6 and C-8 positions of the octanoyl moiety bound to the lipoyl domains of lipoate-dependent enzymes, thereby converting the octanoylated domains into lipoylated derivatives. The polypeptide is Lipoyl synthase (Pseudomonas aeruginosa (strain LESB58)).